Consider the following 670-residue polypeptide: MVSFVIRDAEEKRHRNGVNALQLDPVNGRLYSAGRDAIIRVWNSTQTSSQEPYIQSMEHHNDWVNDIVLCCGGRNLISASCDTTVKVWNAHKGFCMSTLRTHRDYVQALAYAKDREQVASAGLDKAIFLWDVNTLTALTASNNTVTTSSITGSKDSIYSLAMNPSGTIIVSGSTENTLRIWDPRTCNKIAKLKGHTENVKALVVSEDGTQVVSGSSDGKIKLWSIGQQRCIQTISVHSEGVWALLMTDNFSHVISGSRDKKIVMTELRNPTNSVLICEERAPVLSLCYNIDQTGIWATTWNSDVRCWKLNKTDKLSNYSYSSNSSINSGGGGDGTPVTNSASNATPASAGKGYEVACIKGGAAIKKYHVLNDKRFMLTKDSEQNVAIYDVLKVKKVEDLGKVDYEEEIKKRSQRVHVPNWFTVDLKTGMPTIVLGQDEVDCFAAWVSAEAGLPEHAESGSDPKVNYGSLLLQALLEYWKPPPPHHHLQGGVPDMENGCDGDIRGNEYFIVPKHTPIIFSEVGGRNVCRLLVKDAAGETESALLSETVPSWVTNVVIERTIPKFIKLPFYLLAHPSMLKQDRSKKERLIANEFIQCRKVCEHVLEKVLGADLPGGGGGSSTGGGGNSNSSQNNSQSDANSEGSQVPAEERIELLCNDVNNEDYGKNIHLNT.

7 WD repeats span residues 13–52, 59–98, 101–140, 152–191, 194–233, 236–275, and 278–317; these read RHRN…SQEP, HHND…CMST, THRD…ALTA, GSKD…KIAK, GHTE…CIQT, VHSE…NSVL, and EERA…KLSN. The interval 321–348 is disordered; sequence SSNSSINSGGGGDGTPVTNSASNATPAS. Positions 338 to 348 are enriched in low complexity; that stretch reads TNSASNATPAS. A WD 8 repeat occupies 359-398; sequence KGGAAIKKYHVLNDKRFMLTKDSEQNVAIYDVLKVKKVED. Residues 613–625 show a composition bias toward gly residues; that stretch reads GGGGGSSTGGGGN. The disordered stretch occupies residues 613-645; sequence GGGGGSSTGGGGNSNSSQNNSQSDANSEGSQVP. The span at 626-635 shows a compositional bias: low complexity; sequence SNSSQNNSQS.

It belongs to the WD repeat WDR48 family. As to quaternary structure, catalytic component of the Usp12-46 deubiquitylase complex consisting of Usp12-46, Wdr20 and Uaf1; regulatory subunit that, together wtih Wdr20, stabilizes Usp12-46. The Usp12-46 deubiquitylase complex associates with arr/arrow; the interaction leads to deubiquitination and stabilization of arr/arrow.

Regulatory component of the Usp12-46 deubiquitylase complex. activates deubiquitination by increasing the catalytic turnover without increasing the affinity of deubiquitinating enzymes for the substrate. The complex deubiquitylates the wg/wingless-signaling receptor arr/arrow, which stabilizes the receptor and increases its concentration at the cell surface; this enhances the sensitivity of cells to wg/wingless-signal stimulation. This increases the amplitude and spatial range of the signaling response to the wg/wingless morphogen gradient, facilitating the precise concentration-dependent regulation of its target genes. Together with Wdr20 and Usp12-46 required for wg/wingless-mediated signaling in the wing imaginal disc and for wg/wingless-dependent regulation of intestinal stem cell proliferation. In Culex quinquefasciatus (Southern house mosquito), this protein is WD repeat-containing protein 48 homolog.